The chain runs to 94 residues: Protein translocase subunit SecE (94 aa).

The segment at 1–32 is disordered; it reads MTDAVGSIDMPDAQDEAPDSKKSRKGGKRGKK. Residues 22–32 are compositionally biased toward basic residues; it reads KSRKGGKRGKK. A helical transmembrane segment spans residues 65-85; the sequence is TVVIIFVVIMIGLVTLIDYGF.

Belongs to the SecE/SEC61-gamma family. As to quaternary structure, component of the Sec protein translocase complex. Heterotrimer consisting of SecY, SecE and SecG subunits. The heterotrimers can form oligomers, although 1 heterotrimer is thought to be able to translocate proteins. Interacts with the ribosome. Interacts with SecDF, and other proteins may be involved. Interacts with SecA.

It is found in the cell membrane. Functionally, essential subunit of the Sec protein translocation channel SecYEG. Clamps together the 2 halves of SecY. May contact the channel plug during translocation. This is Protein translocase subunit SecE from Streptomyces lividans.